The following is a 900-amino-acid chain: 3'-5' exonuclease DinG (900 aa).

Residues 8 to 161 enclose the Exonuclease domain; it reads VVDLETTGNQ…DEDAATTAQL (154 aa). The region spanning 241-496 is the Helicase ATP-binding domain; sequence TLVTKELGLT…KSIDLLEQQR (256 aa). 276-283 contributes to the ATP binding site; sequence APLGSGKS. The DEAH box signature appears at 448-451; that stretch reads DEAH. The Helicase C-terminal domain maps to 714–883; it reads YVIEYVSVVE…RYRQKKGDIK (170 aa).

The protein belongs to the helicase family. DinG subfamily. Type 2 sub-subfamily.

Its function is as follows. 3'-5' exonuclease. In Staphylococcus saprophyticus subsp. saprophyticus (strain ATCC 15305 / DSM 20229 / NCIMB 8711 / NCTC 7292 / S-41), this protein is 3'-5' exonuclease DinG.